Reading from the N-terminus, the 568-residue chain is Multidrug and toxin extrusion protein 1 (568 aa).

Residue methionine 1 is modified to N-acetylmethionine. At 1 to 36 the chain is on the cytoplasmic side; it reads MEAPVELGPGGRQASPERRHWLRCLVLSDFREELRA. A helical transmembrane segment spans residues 37–57; sequence LLVLACPAFLAQLMVFLISFV. At 58–71 the chain is on the extracellular side; that stretch reads SSVFCGHLSKLELN. The helical transmembrane segment at 72–92 threads the bilayer; that stretch reads AVTLAIAVINVMGVSVGFGLS. Residues 93–119 lie on the Cytoplasmic side of the membrane; sequence SACDTLISQTYGSRNLKHVGVILQRGS. A helical transmembrane segment spans residues 120-140; it reads LILLLCCLPCWALFLNTQHIL. The Extracellular portion of the chain corresponds to 141 to 151; sequence LLFRQDPAVSR. A helical membrane pass occupies residues 152–172; the sequence is LTQTYVTIFIPALPATFLYTL. Residues 173-175 lie on the Cytoplasmic side of the membrane; that stretch reads QVK. Residues 176–196 form a helical membrane-spanning segment; it reads YLLNQGIVLPQVVTGVAANLV. Over 197–214 the chain is Extracellular; sequence NALANYLFVYQLHLGVMG. The chain crosses the membrane as a helical span at residues 215 to 235; it reads SALANTVAQFTLALLLFLYIL. At 236–255 the chain is on the cytoplasmic side; sequence RSKVYQATWGGWSLECLQDW. A helical membrane pass occupies residues 256–278; sequence ASFFRLAIPSMLMLCMEWWAYEI. Topologically, residues 279–294 are extracellular; sequence GSFLSGILGMVELGAQ. A helical membrane pass occupies residues 295–315; the sequence is SVTYELAVIVYMIPMGLSVAV. Residues 316-335 are Cytoplasmic-facing; the sequence is NVRVGNALGAGNIEQAKKSS. The chain crosses the membrane as a helical span at residues 336–356; it reads AVALLVTELIAVVFCVMLLSC. Residues 357–369 are Extracellular-facing; sequence KDLVGYIFTSDRD. A helical transmembrane segment spans residues 370–390; that stretch reads IIALVAQVTPIYAVSHLFESL. The Cytoplasmic portion of the chain corresponds to 391–407; that stretch reads AGTSGGILRGSGNQKFG. A helical transmembrane segment spans residues 408–430; that stretch reads AIVNAIGYYVVGLPIGIALMFAA. Residues 431–433 are Extracellular-facing; that stretch reads KLG. Residues 434–456 form a helical membrane-spanning segment; the sequence is VIGLWLGIVVCAVSQAVCFLGFI. Over 457 to 544 the chain is Cytoplasmic; that stretch reads ARLNWTKACQ…LSGKQLALRR (88 aa). Residues 545–565 traverse the membrane as a helical segment; it reads GLLLLGVILVLLAGILVKVYV. Residues 566 to 568 are Extracellular-facing; it reads RTQ.

This sequence belongs to the multi antimicrobial extrusion (MATE) (TC 2.A.66.1) family. Predominantly expressed in kidney and liver.

The protein localises to the cell membrane. Its subcellular location is the apical cell membrane. The catalysed reaction is thiamine(out) + H(+)(in) = thiamine(in) + H(+)(out). It catalyses the reaction estrone 3-sulfate(in) + H(+)(out) = estrone 3-sulfate(out) + H(+)(in). The enzyme catalyses creatinine(in) + H(+)(out) = creatinine(out) + H(+)(in). It carries out the reaction agmatine(in) + H(+)(out) = agmatine(out) + H(+)(in). In terms of biological role, multidrug efflux pump that functions as a H(+)/organic cation antiporter. Plays a physiological role in the excretion of cationic compounds including endogenous metabolites, drugs, toxins through the kidney and liver, into urine and bile respectively. Mediates the efflux of endogenous compounds such as creatinine, vitamin B1/thiamine, agmatine and estrone-3-sulfate. May also contribute to regulate the transport of cationic compounds in testis across the blood-testis-barrier. This is Multidrug and toxin extrusion protein 1 (SLC47A1) from Oryctolagus cuniculus (Rabbit).